The following is a 471-amino-acid chain: Alpha-galactosidase 1 (471 aa).

Positions 1–18 (MFAFYFLTACISLKGVFG) are cleaved as a signal peptide. A disulfide bridge connects residues cysteine 42 and cysteine 74. Substrate is bound by residues aspartate 72 and aspartate 73. A glycan (N-linked (GlcNAc...) asparagine) is linked at asparagine 105. A disulfide bridge links cysteine 121 with cysteine 151. Lysine 147 provides a ligand contact to substrate. Catalysis depends on aspartate 149, which acts as the Nucleophile. Asparagine 175 carries an N-linked (GlcNAc...) asparagine glycan. Residue arginine 205 coordinates substrate. Catalysis depends on aspartate 209, which acts as the Proton donor. 2 cysteine pairs are disulfide-bonded: cysteine 221–cysteine 237 and cysteine 223–cysteine 230. Position 251 (glutamine 251) interacts with substrate. Asparagine 270, asparagine 370, asparagine 403, asparagine 413, asparagine 422, asparagine 435, and asparagine 454 each carry an N-linked (GlcNAc...) asparagine glycan.

This sequence belongs to the glycosyl hydrolase 27 family. Homotetramer.

It is found in the secreted. It carries out the reaction Hydrolysis of terminal, non-reducing alpha-D-galactose residues in alpha-D-galactosides, including galactose oligosaccharides, galactomannans and galactolipids.. The chain is Alpha-galactosidase 1 (MEL1) from Saccharomyces cerevisiae (Baker's yeast).